The chain runs to 291 residues: Pantothenate synthetase (291 aa).

Position 30–37 (30–37 (MGYLHAGH)) interacts with ATP. The active-site Proton donor is histidine 37. A (R)-pantoate-binding site is contributed by glutamine 61. Glutamine 61 contacts beta-alanine. 147–150 (GEKD) contacts ATP. Glutamine 153 is a binding site for (R)-pantoate. ATP-binding positions include valine 176 and 184–187 (LSSR).

This sequence belongs to the pantothenate synthetase family. Homodimer.

The protein resides in the cytoplasm. It carries out the reaction (R)-pantoate + beta-alanine + ATP = (R)-pantothenate + AMP + diphosphate + H(+). It participates in cofactor biosynthesis; (R)-pantothenate biosynthesis; (R)-pantothenate from (R)-pantoate and beta-alanine: step 1/1. Its function is as follows. Catalyzes the condensation of pantoate with beta-alanine in an ATP-dependent reaction via a pantoyl-adenylate intermediate. This Rhizobium rhizogenes (strain K84 / ATCC BAA-868) (Agrobacterium radiobacter) protein is Pantothenate synthetase.